Reading from the N-terminus, the 356-residue chain is D-alanine--D-alanine ligase (356 aa).

One can recognise an ATP-grasp domain in the interval 134–339 (KQLFEHRGLP…YSDLITKLID (206 aa)). 167–222 (KDKLTYPVFVKPANLGSSVGISKCNNEDELKSGIEEAFQFDRKLVIEQGINAREVE) contacts ATP. Mg(2+)-binding residues include Asp-293, Glu-306, and Asn-308.

Belongs to the D-alanine--D-alanine ligase family. Mg(2+) serves as cofactor. The cofactor is Mn(2+).

Its subcellular location is the cytoplasm. The catalysed reaction is 2 D-alanine + ATP = D-alanyl-D-alanine + ADP + phosphate + H(+). Its pathway is cell wall biogenesis; peptidoglycan biosynthesis. Its function is as follows. Cell wall formation. The polypeptide is D-alanine--D-alanine ligase (Staphylococcus haemolyticus (strain JCSC1435)).